The primary structure comprises 252 residues: Hydroxyacylglutathione hydrolase (252 aa).

7 residues coordinate Zn(2+): His54, His56, Asp58, His59, His111, Asp128, and His166.

It belongs to the metallo-beta-lactamase superfamily. Glyoxalase II family. In terms of assembly, monomer. Requires Zn(2+) as cofactor.

It carries out the reaction an S-(2-hydroxyacyl)glutathione + H2O = a 2-hydroxy carboxylate + glutathione + H(+). It functions in the pathway secondary metabolite metabolism; methylglyoxal degradation; (R)-lactate from methylglyoxal: step 2/2. Functionally, thiolesterase that catalyzes the hydrolysis of S-D-lactoyl-glutathione to form glutathione and D-lactic acid. In Aliivibrio salmonicida (strain LFI1238) (Vibrio salmonicida (strain LFI1238)), this protein is Hydroxyacylglutathione hydrolase.